Reading from the N-terminus, the 406-residue chain is MNFPIERVRADFPLLSRQVNGQPLVYLDSAASAQKPQAVIDKELHFYRDGYAAVHRGIHSLSAEAIQQMEAVRTQVADFIHAASAEEIIFVRGTTEAINLVANSYGRHFLAAGDSIIITEMEHHANIVPWQMLAQDLGVEIRVWPLTATGELEITALAALIDDTTRLLAVTQVSNVLGTVNPIKDIVAQAKAAGLVVLVDGAQAVMHQPVDVQALGCDFYVFSGHKLYGPSGIGILYGKSALLQQMPPWEGGGAMIKTVSLTQGTTFADAPWRFEAGSPNTAGIMGLGAAIDYVTELGLLPIQQYEQSLMHYALAQLSQIKSLTLYGPTERAGVIAFNLGQHHAYDVGSFLDQYGIAIRTGHHCAMPLMAFYQVPSMCRASLALYNTREDVDRLVAGLQRIEKLLG.

Residue lysine 226 is modified to N6-(pyridoxal phosphate)lysine. Cysteine 364 (cysteine persulfide intermediate) is an active-site residue.

The protein belongs to the class-V pyridoxal-phosphate-dependent aminotransferase family. Csd subfamily. Homodimer. Interacts with SufE and the SufBCD complex composed of SufB, SufC and SufD. The interaction with SufE is required to mediate the direct transfer of the sulfur atom from the S-sulfanylcysteine. Pyridoxal 5'-phosphate serves as cofactor.

The protein resides in the cytoplasm. The enzyme catalyses (sulfur carrier)-H + L-cysteine = (sulfur carrier)-SH + L-alanine. It carries out the reaction L-selenocysteine + AH2 = hydrogenselenide + L-alanine + A + H(+). Its pathway is cofactor biosynthesis; iron-sulfur cluster biosynthesis. Cysteine desulfurases mobilize the sulfur from L-cysteine to yield L-alanine, an essential step in sulfur metabolism for biosynthesis of a variety of sulfur-containing biomolecules. Component of the suf operon, which is activated and required under specific conditions such as oxidative stress and iron limitation. Acts as a potent selenocysteine lyase in vitro, that mobilizes selenium from L-selenocysteine. Selenocysteine lyase activity is however unsure in vivo. The protein is Cysteine desulfurase of Yersinia pestis bv. Antiqua (strain Angola).